The sequence spans 166 residues: Cytochrome b (166 aa).

The next 4 helical transmembrane spans lie at 15 to 35 (FKDI…VLIN), 77 to 97 (LGGV…PFYN), 109 to 129 (INQI…WIGA), and 136 to 156 (YVLL…INPL).

Belongs to the cytochrome b family. The main subunits of complex b-c1 are: cytochrome b, cytochrome c1 and the Rieske protein. It depends on heme as a cofactor.

Its subcellular location is the mitochondrion inner membrane. In terms of biological role, component of the ubiquinol-cytochrome c reductase complex (complex III or cytochrome b-c1 complex) that is part of the mitochondrial respiratory chain. The b-c1 complex mediates electron transfer from ubiquinol to cytochrome c. Contributes to the generation of a proton gradient across the mitochondrial membrane that is then used for ATP synthesis. In Drosophila subobscura (Fruit fly), this protein is Cytochrome b (mt:Cyt-b).